A 754-amino-acid chain; its full sequence is Probable beta-glucosidase D (754 aa).

The N-terminal stretch at 1–20 (MKVLSFIVAAALLGLTGASS) is a signal peptide. 3 N-linked (GlcNAc...) asparagine glycosylation sites follow: N66, N69, and N186. The segment at 186-206 (NRTGGGGGGGGDSGSAPYSSN) is disordered. Positions 188-198 (TGGGGGGGGDS) are enriched in gly residues. The N-linked (GlcNAc...) asparagine glycan is linked to N239. The active site involves D267. N-linked (GlcNAc...) asparagine glycans are attached at residues N301, N345, N443, N512, N534, N573, N588, N655, and N745.

The protein belongs to the glycosyl hydrolase 3 family.

It is found in the secreted. It carries out the reaction Hydrolysis of terminal, non-reducing beta-D-glucosyl residues with release of beta-D-glucose.. It participates in glycan metabolism; cellulose degradation. Its function is as follows. Beta-glucosidases are one of a number of cellulolytic enzymes involved in the degradation of cellulosic biomass. Catalyzes the last step releasing glucose from the inhibitory cellobiose. In Aspergillus niger (strain ATCC MYA-4892 / CBS 513.88 / FGSC A1513), this protein is Probable beta-glucosidase D (bglD).